A 391-amino-acid chain; its full sequence is DNA primase small subunit PriS (391 aa).

Active-site residues include aspartate 98, aspartate 100, and aspartate 294.

The protein belongs to the eukaryotic-type primase small subunit family. Heterodimer of a small subunit (PriS) and a large subunit (PriL). Requires Mg(2+) as cofactor. Mn(2+) is required as a cofactor.

Catalytic subunit of DNA primase, an RNA polymerase that catalyzes the synthesis of short RNA molecules used as primers for DNA polymerase during DNA replication. The small subunit contains the primase catalytic core and has DNA synthesis activity on its own. Binding to the large subunit stabilizes and modulates the activity, increasing the rate of DNA synthesis while decreasing the length of the DNA fragments, and conferring RNA synthesis capability. The DNA polymerase activity may enable DNA primase to also catalyze primer extension after primer synthesis. May also play a role in DNA repair. The sequence is that of DNA primase small subunit PriS from Halobacterium salinarum (strain ATCC 29341 / DSM 671 / R1).